The primary structure comprises 224 residues: Deoxyribose-phosphate aldolase (224 aa).

Asp92 acts as the Proton donor/acceptor in catalysis. Lys155 acts as the Schiff-base intermediate with acetaldehyde in catalysis. Lys184 (proton donor/acceptor) is an active-site residue.

This sequence belongs to the DeoC/FbaB aldolase family. DeoC type 1 subfamily.

It localises to the cytoplasm. The catalysed reaction is 2-deoxy-D-ribose 5-phosphate = D-glyceraldehyde 3-phosphate + acetaldehyde. The protein operates within carbohydrate degradation; 2-deoxy-D-ribose 1-phosphate degradation; D-glyceraldehyde 3-phosphate and acetaldehyde from 2-deoxy-alpha-D-ribose 1-phosphate: step 2/2. Its function is as follows. Catalyzes a reversible aldol reaction between acetaldehyde and D-glyceraldehyde 3-phosphate to generate 2-deoxy-D-ribose 5-phosphate. The polypeptide is Deoxyribose-phosphate aldolase (Shouchella clausii (strain KSM-K16) (Alkalihalobacillus clausii)).